The primary structure comprises 76 residues: Esculentin-2-ALb (76 aa).

The first 22 residues, 1-22 (MFTMKKSLLLLFFLGTISLSLC), serve as a signal peptide directing secretion. A propeptide spanning residues 23 to 39 (EEERSADEDDGEKGVKR) is cleaved from the precursor. A disulfide bridge links cysteine 70 with cysteine 76.

In terms of tissue distribution, expressed by the skin glands.

The protein resides in the secreted. In terms of biological role, antimicrobial peptide with activity against Gram-positive and Gram-negative bacteria and against fungi. Has been tested against S.aureus (MIC=1.25 ug/mL), B.pumilus (MIC=2.5 ug/mL), B.cereus (MIC=7.5 ug/mL), E.coli (MIC=12.5 ug/mL), B.dysenteriae (MIC=7.5 ug/mL), A.cacoaceticus (MIC=12.5 ug/mL), P.aeruginosa (MIC=50.0 ug/mL) and C.albicans (MIC=2.5 ug/mL). Also shows a weak hemolytic activity. This is Esculentin-2-ALb from Amolops loloensis (Lolokou Sucker Frog).